The following is a 414-amino-acid chain: 3-oxoacyl-[acyl-carrier-protein] synthase 2 (414 aa).

The 411-residue stretch at 3-413 folds into the Ketosynthase family 3 (KS3) domain; that stretch reads KRRVVVTGMG…GTNGSLIFKR (411 aa). Catalysis depends on for beta-ketoacyl synthase activity residues cysteine 164, histidine 304, and histidine 342.

Belongs to the thiolase-like superfamily. Beta-ketoacyl-ACP synthases family. As to quaternary structure, homodimer.

It catalyses the reaction a fatty acyl-[ACP] + malonyl-[ACP] + H(+) = a 3-oxoacyl-[ACP] + holo-[ACP] + CO2. The catalysed reaction is (9Z)-hexadecenoyl-[ACP] + malonyl-[ACP] + H(+) = 3-oxo-(11Z)-octadecenoyl-[ACP] + holo-[ACP] + CO2. The protein operates within lipid metabolism; fatty acid biosynthesis. Its function is as follows. Involved in the type II fatty acid elongation cycle. Catalyzes the elongation of a wide range of acyl-ACP by the addition of two carbons from malonyl-ACP to an acyl acceptor. Can efficiently catalyze the conversion of palmitoleoyl-ACP (cis-hexadec-9-enoyl-ACP) to cis-vaccenoyl-ACP (cis-octadec-11-enoyl-ACP), an essential step in the thermal regulation of fatty acid composition. The protein is 3-oxoacyl-[acyl-carrier-protein] synthase 2 (fabF) of Vibrio cholerae serotype O1 (strain ATCC 39315 / El Tor Inaba N16961).